Here is a 208-residue protein sequence, read N- to C-terminus: Small ribosomal subunit protein eS8 (208 aa).

The disordered stretch occupies residues 1–27 (MGISRDNWHKRRKTGGKRKPYHKKRKY). Gly-2 is lipidated: N-myristoyl glycine. Over residues 8-26 (WHKRRKTGGKRKPYHKKRK) the composition is skewed to basic residues. 2 positions are modified to N6-acetyllysine: Lys-37 and Lys-128. Residue Thr-130 is modified to Phosphothreonine. Ser-160 is modified (phosphoserine). Residues Lys-170 and Lys-193 each participate in a glycyl lysine isopeptide (Lys-Gly) (interchain with G-Cter in SUMO2) cross-link.

The protein belongs to the eukaryotic ribosomal protein eS8 family. Component of the small ribosomal subunit. Identified in a IGF2BP1-dependent mRNP granule complex containing untranslated mRNAs. Part of the small subunit (SSU) processome, composed of more than 70 proteins and the RNA chaperone small nucleolar RNA (snoRNA) U3.

The protein localises to the cytoplasm. Its subcellular location is the membrane. It is found in the nucleus. The protein resides in the nucleolus. In terms of biological role, component of the small ribosomal subunit. The ribosome is a large ribonucleoprotein complex responsible for the synthesis of proteins in the cell. Part of the small subunit (SSU) processome, first precursor of the small eukaryotic ribosomal subunit. During the assembly of the SSU processome in the nucleolus, many ribosome biogenesis factors, an RNA chaperone and ribosomal proteins associate with the nascent pre-rRNA and work in concert to generate RNA folding, modifications, rearrangements and cleavage as well as targeted degradation of pre-ribosomal RNA by the RNA exosome. This chain is Small ribosomal subunit protein eS8 (Rps8), found in Mus musculus (Mouse).